The chain runs to 110 residues: Plasma membrane ATPase (110 aa).

Positions 72 and 76 each coordinate Mg(2+). Residues 88-110 form a disordered region; that stretch reads APESTSLNLPNDKELSEIAEQAK. A compositionally biased stretch (basic and acidic residues) spans 98-110; sequence NDKELSEIAEQAK.

The protein belongs to the cation transport ATPase (P-type) (TC 3.A.3) family. Type IIIA subfamily. Post-translationally, the N-terminus is blocked.

Its subcellular location is the cell membrane. It carries out the reaction ATP + H2O + H(+)(in) = ADP + phosphate + 2 H(+)(out). Its function is as follows. The plasma membrane ATPase of plants and fungi is a hydrogen ion pump. The proton gradient it generates drives the active transport of nutrients by H(+)-symport. The resulting external acidification and/or internal alkinization may mediate growth responses. The protein is Plasma membrane ATPase of Avena sativa (Oat).